A 206-amino-acid polypeptide reads, in one-letter code: Large ribosomal subunit protein uL4 (206 aa).

The interval 45–75 is disordered; it reads RQGTHSTKTRGEVRGGGRKPWRQKGTGRARQ. Basic residues predominate over residues 60 to 71; the sequence is GGRKPWRQKGTG.

This sequence belongs to the universal ribosomal protein uL4 family. As to quaternary structure, part of the 50S ribosomal subunit.

Its function is as follows. One of the primary rRNA binding proteins, this protein initially binds near the 5'-end of the 23S rRNA. It is important during the early stages of 50S assembly. It makes multiple contacts with different domains of the 23S rRNA in the assembled 50S subunit and ribosome. Forms part of the polypeptide exit tunnel. This is Large ribosomal subunit protein uL4 from Thermoanaerobacter pseudethanolicus (strain ATCC 33223 / 39E) (Clostridium thermohydrosulfuricum).